Consider the following 469-residue polypeptide: Probable Xaa-Pro aminopeptidase PEPP (469 aa).

Asp-265, Asp-276, Glu-399, and Glu-439 together coordinate Mn(2+).

It belongs to the peptidase M24B family. Requires Mn(2+) as cofactor.

The enzyme catalyses Release of any N-terminal amino acid, including proline, that is linked to proline, even from a dipeptide or tripeptide.. Its function is as follows. Catalyzes the removal of a penultimate prolyl residue from the N-termini of peptides. In Coccidioides posadasii (strain C735) (Valley fever fungus), this protein is Probable Xaa-Pro aminopeptidase PEPP (PEPP).